An 88-amino-acid chain; its full sequence is Large ribosomal subunit protein bL27 (88 aa).

The disordered stretch occupies residues 1–24; the sequence is MAHKKAGGSSRNGRDSEGRRLGVK.

It belongs to the bacterial ribosomal protein bL27 family.

The sequence is that of Large ribosomal subunit protein bL27 from Methylobacterium radiotolerans (strain ATCC 27329 / DSM 1819 / JCM 2831 / NBRC 15690 / NCIMB 10815 / 0-1).